We begin with the raw amino-acid sequence, 932 residues long: Protocadherin gamma-A3 (932 aa).

A signal peptide spans M1–G29. Cadherin domains lie at Q30 to F133, P134 to F242, T243 to I347, T348 to F452, P453 to I562, and D570 to A682. Residues Q30–Y692 are Extracellular-facing. N265, N419, and N545 each carry an N-linked (GlcNAc...) asparagine glycan. The N-linked (GlcNAc...) asparagine glycan is linked to N685. Residues L693–A713 traverse the membrane as a helical segment. Topologically, residues L714–K932 are cytoplasmic. 2 disordered regions span residues N805–N841 and A902–K932. Basic residues predominate over residues N922–K932.

The protein resides in the cell membrane. Potential calcium-dependent cell-adhesion protein. May be involved in the establishment and maintenance of specific neuronal connections in the brain. This Homo sapiens (Human) protein is Protocadherin gamma-A3 (PCDHGA3).